Consider the following 1332-residue polypeptide: Elongator complex protein 1 (1332 aa).

5 positions are modified to phosphoserine: Ser471, Ser804, Ser867, Ser1171, and Ser1174. The mediates dimerization stretch occupies residues 885–1332 (VDVNELYDHS…RTQWKLSLLD (448 aa)). The segment at 1150-1208 (QAGLDDEVPHGQESDLFSETSSVVSGSEMSGKYSHSNSRISARSSKNRRKAERKKHSLK) is disordered. A compositionally biased stretch (polar residues) spans 1164 to 1177 (DLFSETSSVVSGSE). The required for binding to tRNA stretch occupies residues 1191-1209 (ARSSKNRRKAERKKHSLKE). Residues 1194–1206 (SKNRRKAERKKHS) are compositionally biased toward basic residues.

The protein belongs to the ELP1/IKA1 family. As to quaternary structure, homodimer; dimerization promotes ELP1 stability and elongator complex formation. Component of the elongator complex which consists of ELP1, ELP2, ELP3, ELP4, ELP5 and ELP6. Interacts preferentially with MAP3K14/NIK followed by IKK-alpha and IKK-beta.

It localises to the cytoplasm. It is found in the nucleus. It participates in tRNA modification; 5-methoxycarbonylmethyl-2-thiouridine-tRNA biosynthesis. Its function is as follows. Component of the elongator complex which is required for multiple tRNA modifications, including mcm5U (5-methoxycarbonylmethyl uridine), mcm5s2U (5-methoxycarbonylmethyl-2-thiouridine), and ncm5U (5-carbamoylmethyl uridine). The elongator complex catalyzes the formation of carboxymethyluridine in the wobble base at position 34 in tRNAs. Regulates the migration and branching of projection neurons in the developing cerebral cortex, through a process depending on alpha-tubulin acetylation. ELP1 binds to tRNA, mediating interaction of the elongator complex with tRNA. May act as a scaffold protein that assembles active IKK-MAP3K14 complexes (IKKA, IKKB and MAP3K14/NIK). The protein is Elongator complex protein 1 of Homo sapiens (Human).